The primary structure comprises 670 residues: Probable ATP-citrate synthase subunit 1 (670 aa).

Positions 1–22 are disordered; it reads MPSATTASTNGANGASASPAPG. ATP-binding positions include 257 to 277 and 308 to 334; these read LLRY…EVGG and FKTE…KNKS. Glutamate 274 lines the Mg(2+) pocket. Histidine 316 serves as the catalytic Tele-phosphohistidine intermediate. 335–345 contacts CoA; it reads MREAGFYVPDT.

It belongs to the succinate/malate CoA ligase alpha subunit family. Composed of two subunits.

The protein resides in the cytoplasm. The catalysed reaction is oxaloacetate + acetyl-CoA + ADP + phosphate = citrate + ATP + CoA. Its function is as follows. Catalyzes the formation of cytosolic acetyl-CoA, which is mainly used for the biosynthesis of fatty acids and sterols. This chain is Probable ATP-citrate synthase subunit 1, found in Neurospora crassa (strain ATCC 24698 / 74-OR23-1A / CBS 708.71 / DSM 1257 / FGSC 987).